A 151-amino-acid chain; its full sequence is 3-hydroxyacyl-[acyl-carrier-protein] dehydratase FabZ (151 aa).

Residue histidine 54 is part of the active site.

This sequence belongs to the thioester dehydratase family. FabZ subfamily.

The protein resides in the cytoplasm. It carries out the reaction a (3R)-hydroxyacyl-[ACP] = a (2E)-enoyl-[ACP] + H2O. In terms of biological role, involved in unsaturated fatty acids biosynthesis. Catalyzes the dehydration of short chain beta-hydroxyacyl-ACPs and long chain saturated and unsaturated beta-hydroxyacyl-ACPs. The chain is 3-hydroxyacyl-[acyl-carrier-protein] dehydratase FabZ from Pectobacterium atrosepticum (strain SCRI 1043 / ATCC BAA-672) (Erwinia carotovora subsp. atroseptica).